The chain runs to 384 residues: MAQAARLSWVLVSSRCALTEGLLTRPWQPLSAQSRAGFTRVAAGSRGAAVRKGSPRLLGAAALALGGALGLYHTVRWHQRSQDLRAERSAAQLPLSNSLQLTLYQYKTCPFCSKVRAFLDFHSLPYQVVEVNPVRRTEIKFSSYRKVPILVAQEGDSLQQLNDSSVIISALKTYLVSGQPLEEVITYYPPMKAMNDQGKEVTEFCNKYWLMLDEKEAQQMYGGKEARTEEMKWRQWADDWLVHLISPNVYRTPAEALASFDYIVREGKFGAVEAAMAKYVGAAAMYLISKRLKSRHHLQDDVRVDLYEAANKWVTAVGKDRPFMGGQKPNLADLAVYGVLRVMEGLEAFDDLMRHSHIQPWYLRMERAIEEAPSVHHVNPSCKD.

The Lumenal segment spans residues 1–56 (MAQAARLSWVLVSSRCALTEGLLTRPWQPLSAQSRAGFTRVAAGSRGAAVRKGSPR). Residues 57 to 73 (LLGAAALALGGALGLYH) traverse the membrane as a helical segment. Residues 74–384 (TVRWHQRSQD…VHHVNPSCKD (311 aa)) are Cytoplasmic-facing. The region spanning 89 to 192 (SAAQLPLSNS…EVITYYPPMK (104 aa)) is the Glutaredoxin domain. Residues V147 and 163-164 (DS) each bind glutathione. Positions 262 to 376 (YIVREGKFGA…RAIEEAPSVH (115 aa)) constitute a GST C-terminal domain.

Belongs to the GST superfamily. Homodimer. Interacts with EXOSC10. May interact with CEBPB. In terms of processing, synthesized as a Golgi membrane-associated protein, and the proteolytic removal of the N-terminal hydrophobic domain leads to the formation of a mature cytosolic enzyme. As to expression, widely expressed. Expressed in brain, heart, liver, colon and lung.

The protein resides in the golgi apparatus membrane. It localises to the nucleus. The protein localises to the cytoplasm. It catalyses the reaction prostaglandin H2 = prostaglandin E2. It carries out the reaction prostaglandin H2 = (12S)-hydroxy-(5Z,8E,10E)-heptadecatrienoate + malonaldehyde. The protein operates within lipid metabolism; prostaglandin biosynthesis. With respect to regulation, isomerase activity is increased by sulfhydril compounds. Dithiothreitol (DTT) is most effective, followed by glutathione (GSH) and 2-mercaptoethanol. Isomerase that catalyzes the conversion of PGH2 into the more stable prostaglandin E2 (PGE2) (in vitro). The biological function and the GSH-dependent property of PTGES2 is still under debate. In vivo, PTGES2 could form a complex with GSH and heme and would not participate in PGE2 synthesis but would catalyze the degradation of prostaglandin E2 H2 (PGH2) to 12(S)-hydroxy-5(Z),8(E),10(E)-heptadecatrienoic acid (HHT) and malondialdehyde (MDA). May also have transactivation activity toward IFN-gamma (IFNG), possibly via an interaction with CEBPB; however, the relevance of transcription activation activity remains unclear. The sequence is that of Prostaglandin E synthase 2 (Ptges2) from Mus musculus (Mouse).